The sequence spans 176 residues: Conjugal transfer protein TraF (176 aa).

Residues M1–A23 form the signal peptide.

It belongs to the peptidase S26C family.

The protein resides in the periplasm. Its function is as follows. Involved in conjugal transfer of the plasmid. The polypeptide is Conjugal transfer protein TraF (traF) (Agrobacterium tumefaciens (strain 15955)).